Reading from the N-terminus, the 448-residue chain is Tumor necrosis factor receptor superfamily member EDAR (448 aa).

Positions 1-26 (MAHVGDCKWMSWLPVLVVSLMCSAKA) are cleaved as a signal peptide. The Extracellular segment spans residues 27–187 (EDSNCGENEY…LSGQGHLATA (161 aa)). TNFR-Cys repeat units lie at residues 30–71 (NCGE…DYGC), 73–113 (PCPA…DAEC), and 115–150 (PCLPGYYMLENRPRNIYGMVCYSCLLAPPNTKECVG). Intrachain disulfides connect Cys-31-Cys-44, Cys-47-Cys-60, Cys-50-Cys-71, Cys-74-Cys-87, Cys-93-Cys-113, and Cys-135-Cys-148. An N-linked (GlcNAc...) asparagine glycan is attached at Asn-38. A helical transmembrane segment spans residues 188–208 (LIIAMSTIFIMAIAIVLIIMF). Residues 209–448 (YIMKTKPSAP…PPASPPPAAS (240 aa)) lie on the Cytoplasmic side of the membrane. A compositionally biased stretch (low complexity) spans 220–229 (CCSSPPGKSA). The segment at 220–297 (CCSSPPGKSA…EEPAPDKQGS (78 aa)) is disordered. Residues 258–283 (LTATPTKTPKSENDASSENEQLLSRS) are compositionally biased toward polar residues. Positions 358 to 431 (RMLSSTYNSE…DAVESLCADI (74 aa)) constitute a Death domain.

In terms of assembly, binds to EDARADD. Associates with TRAF1, TRAF2, TRAF3 and NIK.

The protein localises to the membrane. Functionally, receptor for EDA isoform TAA, but not for EDA isoform TA-2. May mediate the activation of NF-kappa-B and JNK. May promote caspase-independent cell death. This chain is Tumor necrosis factor receptor superfamily member EDAR (Edar), found in Mus musculus (Mouse).